The following is a 437-amino-acid chain: UBX domain-containing protein 6 (437 aa).

Disordered stretches follow at residues 1–45 and 89–109; these read MNSF…AQGG and ERRQ…QPDR. Basic residues predominate over residues 7-18; sequence FLNKKRVQNHFK. Residues 179-251 form the PUB domain; that stretch reads ETAIETICKY…VFTKPSDVHL (73 aa). The 78-residue stretch at 332–409 folds into the UBX domain; the sequence is YRYKYTLIRV…SLAPAALLHV (78 aa).

Interacts with cdc-48.1 (via N-terminus) and cdc-48.2 (via N-terminus). Expressed in the pharynx and some head neurons.

Its function is as follows. Probably acts as an adapter for ATPase cdc-48.1 and/or cdc-48.2, conferring substrate specificity. Involved in the lysosomal clearance of cellular material in diet restricted conditions. The polypeptide is UBX domain-containing protein 6 (Caenorhabditis elegans).